The following is a 292-amino-acid chain: Homoserine kinase (292 aa).

84–94 (PLSRGLGSSSA) contacts ATP.

The protein belongs to the GHMP kinase family. Homoserine kinase subfamily.

The protein resides in the cytoplasm. It catalyses the reaction L-homoserine + ATP = O-phospho-L-homoserine + ADP + H(+). It participates in amino-acid biosynthesis; L-threonine biosynthesis; L-threonine from L-aspartate: step 4/5. In terms of biological role, catalyzes the ATP-dependent phosphorylation of L-homoserine to L-homoserine phosphate. The protein is Homoserine kinase of Campylobacter jejuni subsp. jejuni serotype O:23/36 (strain 81-176).